The following is a 489-amino-acid chain: Mitochondrial distribution and morphology protein 12 (489 aa).

The 489-residue stretch at 1–489 (MSIDLNWEAA…VFPSFWTFLV (489 aa)) folds into the SMP-LTD domain. Over residues 72–82 (ESDSEDEDEGH) the composition is skewed to acidic residues. Disordered regions lie at residues 72-97 (ESDS…AAAD), 201-313 (WPDA…MRER), and 394-432 (DINH…QPRR). Residues 231–249 (LDTGSPSRPSTANTNPTQL) are compositionally biased toward polar residues. Composition is skewed to low complexity over residues 250-265 (SHGQ…NTSN) and 398-424 (QQRQ…NNPE).

The protein belongs to the MDM12 family. Component of the ER-mitochondria encounter structure (ERMES) or MDM complex, composed of MMM1, MDM10, mdm12 and MDM34. An MMM1 homodimer associates with one molecule of mdm12 on each side in a pairwise head-to-tail manner, and the SMP-LTD domains of MMM1 and mdm12 generate a continuous hydrophobic tunnel for phospholipid trafficking.

It is found in the mitochondrion outer membrane. It localises to the endoplasmic reticulum membrane. Component of the ERMES/MDM complex, which serves as a molecular tether to connect the endoplasmic reticulum (ER) and mitochondria. Components of this complex are involved in the control of mitochondrial shape and protein biogenesis, and function in nonvesicular lipid trafficking between the ER and mitochondria. mdm12 is required for the interaction of the ER-resident membrane protein MMM1 and the outer mitochondrial membrane-resident beta-barrel protein MDM10. The mdm12-MMM1 subcomplex functions in the major beta-barrel assembly pathway that is responsible for biogenesis of all mitochondrial outer membrane beta-barrel proteins, and acts in a late step after the SAM complex. The MDM10-mdm12-MMM1 subcomplex further acts in the TOM40-specific pathway after the action of the mdm12-MMM1 complex. Essential for establishing and maintaining the structure of mitochondria and maintenance of mtDNA nucleoids. The sequence is that of Mitochondrial distribution and morphology protein 12 from Talaromyces marneffei (strain ATCC 18224 / CBS 334.59 / QM 7333) (Penicillium marneffei).